The chain runs to 1181 residues: Sodium/potassium/calcium exchanger 1 (1181 aa).

Topologically, residues 1–419 are extracellular; sequence MGKLIRMGTQ…DLFSVEDRRQ (419 aa). Disordered regions lie at residues 107–232, 255–276, and 300–323; these read AMED…TSLK, SLVG…STTP, and STPA…GTST. Positions 124–136 are enriched in polar residues; that stretch reads SLKNNYSPTTAGT. N-linked (GlcNAc...) asparagine glycosylation occurs at Asn271. Positions 301-311 are enriched in polar residues; it reads TPATTEGSTAA. The chain crosses the membrane as a helical span at residues 420-440; it reads GWVVLHIFGMTYVFVALAIVC. Over 441–464 the chain is Cytoplasmic; the sequence is DEYFVPALGVITDKLQISEDVAGA. One copy of the Alpha-1 repeat lies at 461–501; the sequence is VAGATFMAAGGSAPELFTSLIGVFISHSNVGIGTIVGSAVF. A helical transmembrane segment spans residues 465 to 485; the sequence is TFMAAGGSAPELFTSLIGVFI. The Extracellular portion of the chain corresponds to 486-491; that stretch reads SHSNVG. Residues 492–512 form a helical membrane-spanning segment; it reads IGTIVGSAVFNILFVIGTCAL. The Cytoplasmic portion of the chain corresponds to 513 to 519; it reads FSREILN. The chain crosses the membrane as a helical span at residues 520 to 544; the sequence is LTWWPLFRDVSFYILDLSMLIVFFL. The Extracellular segment spans residues 545-552; the sequence is DSLIAWWE. Residues 553-569 traverse the membrane as a helical segment; that stretch reads SLLLLLAYALYVFTMKW. Topologically, residues 570–989 are cytoplasmic; the sequence is NKQIERWVKE…SLEWPESRQK (420 aa). Residues 598–617 form a disordered region; sequence PSDGAIEENEQQDNKKLKLP. A Phosphoserine modification is found at Ser625. The interval 650-983 is disordered; that stretch reads GEARPSKDKQ…ESEEPLSLEW (334 aa). Thr690 is modified (phosphothreonine). Over residues 701–715 the composition is skewed to acidic residues; that stretch reads GDQEEDPGCQEDVDE. A run of 14 repeats spans residues 730-741, 742-754, 755-766, 767-778, 779-791, 792-804, 805-817, 818-830, 831-843, 844-856, 857-869, 870-881, 882-893, and 894-905. Basic and acidic residues-rich tracts occupy residues 730–750, 757–775, and 782–805; these read ETEA…RKED, ETKG…GKDE, and AEGK…HEGE. The interval 730–905 is 14 X approximate tandem repeats; sequence ETEAEGKKDE…EAGEKDEHEG (176 aa). Residues 806–820 show a composition bias toward acidic residues; the sequence is TEAEGTEDEQEGETE. Positions 834–906 are enriched in basic and acidic residues; sequence AEGKEVEHEV…AGEKDEHEGQ (73 aa). Acidic residues-rich tracts occupy residues 921 to 931 and 949 to 979; these read GEAEANAEDQC and GDSE…EEPL. The chain crosses the membrane as a helical span at residues 990–1010; it reads QAIYLFLLPIVFPLWLTIPDV. Topologically, residues 1011-1017 are extracellular; the sequence is RRQEARK. The helical transmembrane segment at 1018–1038 threads the bilayer; the sequence is FFVITFLGSIIWIAMFSYLMV. Residues 1039–1053 lie on the Cytoplasmic side of the membrane; it reads WWAHQVGETIGISEE. A helical transmembrane segment spans residues 1054-1074; sequence IMGLTILAAGTSIPDLITSVI. The stretch at 1061 to 1092 is one Alpha-2 repeat; sequence AAGTSIPDLITSVIVARKGLGDMAVSSSVGSN. Over 1075 to 1092 the chain is Extracellular; sequence VARKGLGDMAVSSSVGSN. The chain crosses the membrane as a helical span at residues 1093–1113; the sequence is IFDITVGLPVPWLLFSLINAL. Topologically, residues 1114–1121 are cytoplasmic; the sequence is QPIPVSSN. The chain crosses the membrane as a helical span at residues 1122 to 1142; the sequence is GLFCAIVLLFLMLLFVIFSIA. The Extracellular segment spans residues 1143 to 1150; the sequence is SCKWRMNK. A helical transmembrane segment spans residues 1151 to 1171; sequence ILGFTMFLLYFVFLVISVMLE. Over 1172–1181 the chain is Cytoplasmic; sequence DRIISCPVSV.

The protein belongs to the Ca(2+):cation antiporter (CaCA) (TC 2.A.19) family. SLC24A subfamily. The uncleaved signal sequence is required for efficient membrane targeting and proper membrane integration and topology. Highly expressed in the eye.

Its subcellular location is the cell membrane. The catalysed reaction is Ca(2+)(out) + K(+)(out) + 4 Na(+)(in) = Ca(2+)(in) + K(+)(in) + 4 Na(+)(out). In terms of biological role, calcium, potassium:sodium antiporter that transports 1 Ca(2+) and 1 K(+) in exchange for 4 Na(+). Critical component of the visual transduction cascade, controlling the calcium concentration of outer segments during light and darkness. Light causes a rapid lowering of cytosolic free calcium in the outer segment of both retinal rod and cone photoreceptors and the light-induced lowering of calcium is caused by extrusion via this protein which plays a key role in the process of light adaptation. The protein is Sodium/potassium/calcium exchanger 1 (Slc24a1) of Rattus norvegicus (Rat).